The chain runs to 211 residues: Suppressor of RNA silencing p3 (211 aa).

It belongs to the tenuiviruses p3 protein family. Homodimer.

Its subcellular location is the host cytoplasm. Functionally, acts as a suppressor of RNA-mediated gene silencing, also known as post-transcriptional gene silencing (PTGS), presumably through the binding of dsRNA. This is Suppressor of RNA silencing p3 from Avena sativa (Oat).